The sequence spans 220 residues: Large ribosomal subunit protein uL1 (220 aa).

The protein belongs to the universal ribosomal protein uL1 family. As to quaternary structure, part of the 50S ribosomal subunit.

Functionally, binds directly to 23S rRNA. The L1 stalk is quite mobile in the ribosome, and is involved in E site tRNA release. In terms of biological role, protein L1 is also a translational repressor protein, it controls the translation of the L11 operon by binding to its mRNA. The chain is Large ribosomal subunit protein uL1 from Ehrlichia chaffeensis (strain ATCC CRL-10679 / Arkansas).